The following is a 318-amino-acid chain: MNYQVLLYYKYMTIDDPEQFAQDHLAFCKAHHLKGRILVSTEGINGTLSGTKEETEQYMAHMHADERFKDMVFKIDEAEGHAFKKMHVRPRKEIVALDLEDDVDPRHTTGQYLSPVEFRKALEDDDTVIIDARNDYEFDLGHFRGAIRPNITRFRDLPDWIKENKALFADKKVVTYCTGGIRCEKFSGWLLKEGFEDVAQLHGGIATYGKDPETKSEYWDGKMYVFDDRISVDINQVEKTIIGKDWFDGKPCERYINCANPECNKQILVSEENETKYLGACSYECAKHERNRYVQANNISDNEWQQRLTNFDDLHQHA.

The 95-residue stretch at 123–217 (EDDDTVIIDA…YGKDPETKSE (95 aa)) folds into the Rhodanese domain. Residue Cys-177 is the Cysteine persulfide intermediate of the active site.

It belongs to the TrhO family.

It carries out the reaction uridine(34) in tRNA + AH2 + O2 = 5-hydroxyuridine(34) in tRNA + A + H2O. Its function is as follows. Catalyzes oxygen-dependent 5-hydroxyuridine (ho5U) modification at position 34 in tRNAs. The chain is tRNA uridine(34) hydroxylase from Staphylococcus aureus (strain COL).